The sequence spans 460 residues: Argininosuccinate lyase (460 aa).

This sequence belongs to the lyase 1 family. Argininosuccinate lyase subfamily.

Its subcellular location is the cytoplasm. It carries out the reaction 2-(N(omega)-L-arginino)succinate = fumarate + L-arginine. It participates in amino-acid biosynthesis; L-arginine biosynthesis; L-arginine from L-ornithine and carbamoyl phosphate: step 3/3. This chain is Argininosuccinate lyase, found in Parvibaculum lavamentivorans (strain DS-1 / DSM 13023 / NCIMB 13966).